Consider the following 299-residue polypeptide: Taste receptor type 2 member 1 (299 aa).

Topologically, residues 1 to 9 are extracellular; that stretch reads MLESHLIIY. Residues 10–30 traverse the membrane as a helical segment; sequence FLLAVIQFLLGTFTNGIIVVV. The Cytoplasmic segment spans residues 31–55; it reads NGIDLIKHRKMAPLDLLLSCLAVSR. Residues 56 to 76 form a helical membrane-spanning segment; the sequence is IFLQLFIFYINVVVIFLIEFI. At 77–81 the chain is on the extracellular side; sequence TCSAS. The chain crosses the membrane as a helical span at residues 82 to 102; it reads CAFLVFVNELELWLATWLGVF. Residues 103–124 are Cytoplasmic-facing; it reads YCAKVASVLHPLFIWLKMRISK. The chain crosses the membrane as a helical span at residues 125 to 145; the sequence is SVPWMILGSLLYVSMICIFHI. Topologically, residues 146-178 are extracellular; the sequence is KYTGFMVPYFLRNLFFQNATIQTEVKQAIQIFS. The N-linked (GlcNAc...) asparagine glycan is linked to N163. A helical membrane pass occupies residues 179 to 199; the sequence is FVAELLVPLLIFLVAVLLLIF. Topologically, residues 200-222 are cytoplasmic; that stretch reads SLGRHTRQMRNTVAGSRVPGRGA. Residues 223 to 243 traverse the membrane as a helical segment; it reads HISALLSILSFLILYISHYLI. Residues 244–257 lie on the Extracellular side of the membrane; that stretch reads KTFLSSLKFHVKRF. A helical transmembrane segment spans residues 258–278; sequence VFLFCILVIGTYPSGHSLILI. Residues 279-299 are Cytoplasmic-facing; that stretch reads LGNPKLKQNTKKFLCHSKCCQ.

Belongs to the G-protein coupled receptor T2R family.

The protein localises to the membrane. Receptor that may play a role in the perception of bitterness and is gustducin-linked. May play a role in sensing the chemical composition of the gastrointestinal content. The activity of this receptor may stimulate alpha gustducin, mediate PLC-beta-2 activation and lead to the gating of TRPM5. The sequence is that of Taste receptor type 2 member 1 (TAS2R1) from Chlorocebus aethiops (Green monkey).